Consider the following 226-residue polypeptide: HTH-type transcriptional regulator TcmR (226 aa).

The span at methionine 1–asparagine 16 shows a compositional bias: polar residues. The interval methionine 1 to leucine 25 is disordered. The HTH tetR-type domain occupies arginine 26 to phenylalanine 86. The H-T-H motif DNA-binding region spans threonine 49–phenylalanine 68.

The protein operates within antibiotic biosynthesis; tetracenomycin C biosynthesis. Represses transcription of the divergently oriented tcmR and tcmA (tetracenomycin C resistance and export) genes by binding to an intergenic operator region. This binding is inhibited by tetracenomycin C. The sequence is that of HTH-type transcriptional regulator TcmR (tcmR) from Streptomyces glaucescens.